We begin with the raw amino-acid sequence, 49 residues long: Large ribosomal subunit protein bL33 (49 aa).

It belongs to the bacterial ribosomal protein bL33 family.

This Nitratidesulfovibrio vulgaris (strain ATCC 29579 / DSM 644 / CCUG 34227 / NCIMB 8303 / VKM B-1760 / Hildenborough) (Desulfovibrio vulgaris) protein is Large ribosomal subunit protein bL33.